The primary structure comprises 195 residues: uncharacterized protein (195 aa).

Residues 86–158 (LPSEGGWTSG…PAPVSGEPPE (73 aa)) form a disordered region.

This is an uncharacterized protein from Homo sapiens (Human).